Here is a 230-residue protein sequence, read N- to C-terminus: MSERAPVVTIDGPSGAGKGTISQLLAKHLGWQLLDSGAIYRVLALAAIHHDVELENEESITLLASHLDVKFLTGNEKDPVQVILEGEDVTTAIRTQECSNAASKVAAFPRVREALLRRQRAFRTAPGLIADGRDMGTVVFPTASAKLYLTASAQERAQRRYNQLQDKGFDVNIERLLAEIIERDDRDMNRPVAPLVPAENALVIDTSDKGIDEVLELALNYINQKLSSTN.

12–20 (GPSGAGKGT) lines the ATP pocket.

The protein belongs to the cytidylate kinase family. Type 1 subfamily.

Its subcellular location is the cytoplasm. The catalysed reaction is CMP + ATP = CDP + ADP. The enzyme catalyses dCMP + ATP = dCDP + ADP. This is Cytidylate kinase from Shewanella oneidensis (strain ATCC 700550 / JCM 31522 / CIP 106686 / LMG 19005 / NCIMB 14063 / MR-1).